Here is a 126-residue protein sequence, read N- to C-terminus: Small ribosomal subunit protein uS13 (126 aa).

Residues 92–126 (HRRGLPVRGQRTKTNARTRKGPKKTVAGKKKATRK) form a disordered region.

This sequence belongs to the universal ribosomal protein uS13 family. Part of the 30S ribosomal subunit. Forms a loose heterodimer with protein S19. Forms two bridges to the 50S subunit in the 70S ribosome.

Located at the top of the head of the 30S subunit, it contacts several helices of the 16S rRNA. In the 70S ribosome it contacts the 23S rRNA (bridge B1a) and protein L5 of the 50S subunit (bridge B1b), connecting the 2 subunits; these bridges are implicated in subunit movement. Contacts the tRNAs in the A and P-sites. The chain is Small ribosomal subunit protein uS13 from Deinococcus deserti (strain DSM 17065 / CIP 109153 / LMG 22923 / VCD115).